Here is a 612-residue protein sequence, read N- to C-terminus: Elongation factor 4 (612 aa).

Residues 12–194 (SRIRNFSIIA…QIVEKVPAPT (183 aa)) form the tr-type G domain. Residues 24 to 29 (DHGKST) and 141 to 144 (NKID) each bind GTP.

Belongs to the TRAFAC class translation factor GTPase superfamily. Classic translation factor GTPase family. LepA subfamily.

The protein resides in the cell membrane. The enzyme catalyses GTP + H2O = GDP + phosphate + H(+). Functionally, required for accurate and efficient protein synthesis under certain stress conditions. May act as a fidelity factor of the translation reaction, by catalyzing a one-codon backward translocation of tRNAs on improperly translocated ribosomes. Back-translocation proceeds from a post-translocation (POST) complex to a pre-translocation (PRE) complex, thus giving elongation factor G a second chance to translocate the tRNAs correctly. Binds to ribosomes in a GTP-dependent manner. The protein is Elongation factor 4 of Bacillus subtilis (strain 168).